A 101-amino-acid polypeptide reads, in one-letter code: Protein Tat (101 aa).

The interval 1 to 24 (MDPVDPNLEPWNHPGSQPKTPCNK) is interaction with human CREBBP. The interval 1–48 (MDPVDPNLEPWNHPGSQPKTPCNKCFCKVCCWHCQVCFLNKGLGISYG) is transactivation. Zn(2+) contacts are provided by Cys-22, Cys-25, and Cys-27. The cysteine-rich stretch occupies residues 22–37 (CNKCFCKVCCWHCQVC). The residue at position 28 (Lys-28) is an N6-acetyllysine; by host PCAF. 4 residues coordinate Zn(2+): Cys-30, His-33, Cys-34, and Cys-37. A core region spans residues 38-48 (FLNKGLGISYG). Positions 48–57 (GRKKRKHRRG) are enriched in basic residues. Residues 48–101 (GRKKRKHRRGTPQSSKGHQDPVPKQPLPTTRGNPTGPKESKKEVASKAEADQCD) are disordered. Residues 49–57 (RKKRKHRRG) carry the Nuclear localization signal, RNA-binding (TAR), and protein transduction motif. Residues 49-86 (RKKRKHRRGTPQSSKGHQDPVPKQPLPTTRGNPTGPKE) are interaction with the host capping enzyme RNGTT. N6-acetyllysine; by host EP300 and GCN5L2 is present on residues Lys-50 and Lys-51. Asymmetric dimethylarginine; by host PRMT6 is present on Arg-52. A Glycyl lysine isopeptide (Lys-Gly) (interchain with G-Cter in ubiquitin) cross-link involves residue Lys-71. The segment covering 85–101 (KESKKEVASKAEADQCD) has biased composition (basic and acidic residues).

The protein belongs to the lentiviruses Tat family. Interacts with host CCNT1. Associates with the P-TEFb complex composed at least of Tat, P-TEFb (CDK9 and CCNT1), TAR RNA, RNA Pol II. Recruits the HATs CREBBP, TAF1/TFIID, EP300, PCAF and GCN5L2. Interacts with host KAT5/Tip60; this interaction targets the latter to degradation. Interacts with the host deacetylase SIRT1. Interacts with host capping enzyme RNGTT; this interaction stimulates RNGTT. Binds to host KDR, and to the host integrins ITGAV/ITGB3 and ITGA5/ITGB1. Interacts with host KPNB1/importin beta-1 without previous binding to KPNA1/importin alpha-1. Interacts with EIF2AK2. Interacts with host nucleosome assembly protein NAP1L1; this interaction may be required for the transport of Tat within the nucleus, since the two proteins interact at the nuclear rim. Interacts with host C1QBP/SF2P32; this interaction involves lysine-acetylated Tat. Interacts with the host chemokine receptors CCR2, CCR3 and CXCR4. Interacts with host DPP4/CD26; this interaction may trigger an anti-proliferative effect. Interacts with host LDLR. Interacts with the host extracellular matrix metalloproteinase MMP1. Interacts with host PRMT6; this interaction mediates Tat's methylation. Interacts with, and is ubiquitinated by MDM2/Hdm2. Interacts with host PSMC3 and HTATIP2. Interacts with STAB1; this interaction may overcome SATB1-mediated repression of IL2 and IL2RA (interleukin) in T cells by binding to the same domain than HDAC1. Interacts (when acetylated) with human CDK13, thereby increasing HIV-1 mRNA splicing and promoting the production of the doubly spliced HIV-1 protein Nef. Interacts with host TBP; this interaction modulates the activity of transcriptional pre-initiation complex. Interacts with host RELA. Interacts with host PLSCR1; this interaction negatively regulates Tat transactivation activity by altering its subcellular distribution. Asymmetrical arginine methylation by host PRMT6 seems to diminish the transactivation capacity of Tat and affects the interaction with host CCNT1. In terms of processing, acetylation by EP300, CREBBP, GCN5L2/GCN5 and PCAF regulates the transactivation activity of Tat. EP300-mediated acetylation of Lys-50 promotes dissociation of Tat from the TAR RNA through the competitive binding to PCAF's bromodomain. In addition, the non-acetylated Tat's N-terminus can also interact with PCAF. PCAF-mediated acetylation of Lys-28 enhances Tat's binding to CCNT1. Lys-50 is deacetylated by SIRT1. Post-translationally, polyubiquitination by host MDM2 does not target Tat to degradation, but activates its transactivation function and fosters interaction with CCNT1 and TAR RNA. Phosphorylated by EIF2AK2 on serine and threonine residues adjacent to the basic region important for TAR RNA binding and function. Phosphorylation of Tat by EIF2AK2 is dependent on the prior activation of EIF2AK2 by dsRNA.

It is found in the host nucleus. Its subcellular location is the host nucleolus. The protein localises to the host cytoplasm. It localises to the secreted. Transcriptional activator that increases RNA Pol II processivity, thereby increasing the level of full-length viral transcripts. Recognizes a hairpin structure at the 5'-LTR of the nascent viral mRNAs referred to as the transactivation responsive RNA element (TAR) and recruits the cyclin T1-CDK9 complex (P-TEFb complex) that will in turn hyperphosphorylate the RNA polymerase II to allow efficient elongation. The CDK9 component of P-TEFb and other Tat-activated kinases hyperphosphorylate the C-terminus of RNA Pol II that becomes stabilized and much more processive. Other factors such as HTATSF1/Tat-SF1, SUPT5H/SPT5, and HTATIP2 are also important for Tat's function. Besides its effect on RNA Pol II processivity, Tat induces chromatin remodeling of proviral genes by recruiting the histone acetyltransferases (HATs) CREBBP, EP300 and PCAF to the chromatin. This also contributes to the increase in proviral transcription rate, especially when the provirus integrates in transcriptionally silent region of the host genome. To ensure maximal activation of the LTR, Tat mediates nuclear translocation of NF-kappa-B by interacting with host RELA. Through its interaction with host TBP, Tat may also modulate transcription initiation. Tat can reactivate a latently infected cell by penetrating in it and transactivating its LTR promoter. In the cytoplasm, Tat is thought to act as a translational activator of HIV-1 mRNAs. Functionally, extracellular circulating Tat can be endocytosed by surrounding uninfected cells via the binding to several surface receptors such as CD26, CXCR4, heparan sulfate proteoglycans (HSPG) or LDLR. Neurons are rarely infected, but they internalize Tat via their LDLR. Through its interaction with nuclear HATs, Tat is potentially able to control the acetylation-dependent cellular gene expression. Modulates the expression of many cellular genes involved in cell survival, proliferation or in coding for cytokines or cytokine receptors. Tat plays a role in T-cell and neurons apoptosis. Tat induced neurotoxicity and apoptosis probably contribute to neuroAIDS. Circulating Tat also acts as a chemokine-like and/or growth factor-like molecule that binds to specific receptors on the surface of the cells, affecting many cellular pathways. In the vascular system, Tat binds to ITGAV/ITGB3 and ITGA5/ITGB1 integrins dimers at the surface of endothelial cells and competes with bFGF for heparin-binding sites, leading to an excess of soluble bFGF. In Homo sapiens (Human), this protein is Protein Tat.